A 119-amino-acid chain; its full sequence is Protein TusC (119 aa).

The protein belongs to the DsrF/TusC family. Heterohexamer, formed by a dimer of trimers. The hexameric TusBCD complex contains 2 copies each of TusB, TusC and TusD. The TusBCD complex interacts with TusE.

The protein localises to the cytoplasm. Part of a sulfur-relay system required for 2-thiolation of 5-methylaminomethyl-2-thiouridine (mnm(5)s(2)U) at tRNA wobble positions. This Escherichia coli O45:K1 (strain S88 / ExPEC) protein is Protein TusC.